The chain runs to 424 residues: Tyrosine--tRNA ligase (424 aa).

Tyr37 provides a ligand contact to L-tyrosine. A 'HIGH' region motif is present at residues 42-51 (PTADSLHLGH). An N6-acetyllysine modification is found at Lys144. Positions 175 and 179 each coordinate L-tyrosine. Positions 235–239 (KFGKT) match the 'KMSKS' region motif. An ATP-binding site is contributed by Lys238. One can recognise an S4 RNA-binding domain in the interval 357 to 414 (ADLMQALVDSELQPSRGQARKTIASNAITINGEKQSDPEYFFKEEDRLFGRFTLLRRG).

Belongs to the class-I aminoacyl-tRNA synthetase family. TyrS type 1 subfamily. As to quaternary structure, homodimer.

The protein localises to the cytoplasm. The enzyme catalyses tRNA(Tyr) + L-tyrosine + ATP = L-tyrosyl-tRNA(Tyr) + AMP + diphosphate + H(+). Catalyzes the attachment of tyrosine to tRNA(Tyr) in a two-step reaction: tyrosine is first activated by ATP to form Tyr-AMP and then transferred to the acceptor end of tRNA(Tyr). This Escherichia coli O8 (strain IAI1) protein is Tyrosine--tRNA ligase.